The following is a 453-amino-acid chain: Bifunctional protein GlmU (453 aa).

Residues 1–225 form a pyrophosphorylase region; the sequence is MNIVILAAGT…EWETLGVNSK (225 aa). Residues 6–9, Lys-20, Gln-71, 76–77, 98–100, Gly-135, Glu-150, Asn-165, and Asn-223 each bind UDP-N-acetyl-alpha-D-glucosamine; these read LAAG, GT, and YGD. Asp-100 serves as a coordination point for Mg(2+). Mg(2+) is bound at residue Asn-223. The segment at 226–246 is linker; the sequence is AQLAELERIHQRNVADALLVD. Residues 247-453 form an N-acetyltransferase region; the sequence is GVTLADPARV…GYVRPVKKKS (207 aa). Residues Arg-329 and Lys-347 each contribute to the UDP-N-acetyl-alpha-D-glucosamine site. Residue His-359 is the Proton acceptor of the active site. Residues Tyr-362 and Asn-373 each contribute to the UDP-N-acetyl-alpha-D-glucosamine site. Residues Ala-376, 382-383, Ser-401, and Ala-419 each bind acetyl-CoA; that span reads NY.

The protein in the N-terminal section; belongs to the N-acetylglucosamine-1-phosphate uridyltransferase family. This sequence in the C-terminal section; belongs to the transferase hexapeptide repeat family. In terms of assembly, homotrimer. Requires Mg(2+) as cofactor.

Its subcellular location is the cytoplasm. It carries out the reaction alpha-D-glucosamine 1-phosphate + acetyl-CoA = N-acetyl-alpha-D-glucosamine 1-phosphate + CoA + H(+). The enzyme catalyses N-acetyl-alpha-D-glucosamine 1-phosphate + UTP + H(+) = UDP-N-acetyl-alpha-D-glucosamine + diphosphate. Its pathway is nucleotide-sugar biosynthesis; UDP-N-acetyl-alpha-D-glucosamine biosynthesis; N-acetyl-alpha-D-glucosamine 1-phosphate from alpha-D-glucosamine 6-phosphate (route II): step 2/2. The protein operates within nucleotide-sugar biosynthesis; UDP-N-acetyl-alpha-D-glucosamine biosynthesis; UDP-N-acetyl-alpha-D-glucosamine from N-acetyl-alpha-D-glucosamine 1-phosphate: step 1/1. It participates in bacterial outer membrane biogenesis; LPS lipid A biosynthesis. Functionally, catalyzes the last two sequential reactions in the de novo biosynthetic pathway for UDP-N-acetylglucosamine (UDP-GlcNAc). The C-terminal domain catalyzes the transfer of acetyl group from acetyl coenzyme A to glucosamine-1-phosphate (GlcN-1-P) to produce N-acetylglucosamine-1-phosphate (GlcNAc-1-P), which is converted into UDP-GlcNAc by the transfer of uridine 5-monophosphate (from uridine 5-triphosphate), a reaction catalyzed by the N-terminal domain. The protein is Bifunctional protein GlmU of Burkholderia orbicola (strain MC0-3).